The chain runs to 266 residues: Ubiquinone biosynthesis protein COQ4 homolog, mitochondrial (266 aa).

Residues histidine 169, aspartate 170, histidine 173, and glutamate 185 each contribute to the Zn(2+) site.

It belongs to the COQ4 family. In terms of assembly, component of a multi-subunit COQ enzyme complex. Zn(2+) is required as a cofactor.

It is found in the mitochondrion inner membrane. The enzyme catalyses a 4-hydroxy-3-methoxy-5-(all-trans-polyprenyl)benzoate + H(+) = a 2-methoxy-6-(all-trans-polyprenyl)phenol + CO2. It participates in cofactor biosynthesis; ubiquinone biosynthesis. Its function is as follows. Lyase that catalyzes the C1-decarboxylation of 4-hydroxy-3-methoxy-5-(all-trans-polyprenyl)benzoic acid into 2-methoxy-6-(all-trans-polyprenyl)phenol during ubiquinone biosynthesis. In Drosophila ananassae (Fruit fly), this protein is Ubiquinone biosynthesis protein COQ4 homolog, mitochondrial.